A 274-amino-acid polypeptide reads, in one-letter code: 4-hydroxy-tetrahydrodipicolinate reductase (274 aa).

NAD(+)-binding positions include 8–13 (GALGRM), glutamate 34, 102–104 (GTT), and 128–131 (SQNF). Histidine 160 (proton donor/acceptor) is an active-site residue. Histidine 161 lines the (S)-2,3,4,5-tetrahydrodipicolinate pocket. Lysine 164 functions as the Proton donor in the catalytic mechanism. 170–171 (GT) is a binding site for (S)-2,3,4,5-tetrahydrodipicolinate.

This sequence belongs to the DapB family.

Its subcellular location is the cytoplasm. The enzyme catalyses (S)-2,3,4,5-tetrahydrodipicolinate + NAD(+) + H2O = (2S,4S)-4-hydroxy-2,3,4,5-tetrahydrodipicolinate + NADH + H(+). It carries out the reaction (S)-2,3,4,5-tetrahydrodipicolinate + NADP(+) + H2O = (2S,4S)-4-hydroxy-2,3,4,5-tetrahydrodipicolinate + NADPH + H(+). It participates in amino-acid biosynthesis; L-lysine biosynthesis via DAP pathway; (S)-tetrahydrodipicolinate from L-aspartate: step 4/4. Its function is as follows. Catalyzes the conversion of 4-hydroxy-tetrahydrodipicolinate (HTPA) to tetrahydrodipicolinate. This is 4-hydroxy-tetrahydrodipicolinate reductase from Methanocaldococcus jannaschii (strain ATCC 43067 / DSM 2661 / JAL-1 / JCM 10045 / NBRC 100440) (Methanococcus jannaschii).